A 452-amino-acid polypeptide reads, in one-letter code: UPF0210 protein Dred_1672 (452 aa).

This sequence belongs to the UPF0210 family. As to quaternary structure, homodimer.

This is UPF0210 protein Dred_1672 from Desulforamulus reducens (strain ATCC BAA-1160 / DSM 100696 / MI-1) (Desulfotomaculum reducens).